Here is a 475-residue protein sequence, read N- to C-terminus: Nucleoporin-like protein amo1 (475 aa).

The segment at 1 to 25 (MVVCKYFLQNRCRYGTNCKNQHTVP) adopts a C3H1-type zinc-finger fold. Positions 165–182 (DKSTSNSTVTSNQFNKPT) are enriched in polar residues. 2 disordered regions span residues 165-208 (DKST…DIFG) and 220-252 (NASP…SSFG). Low complexity predominate over residues 183–204 (QNSPFNSFSNNNNSFNNNQQAN). A compositionally biased stretch (polar residues) spans 220–242 (NASPFSQNTSSNSFTGSNPVQNN). A compositionally biased stretch (low complexity) spans 243 to 252 (PSSFGSSSFG).

The protein resides in the nucleus. Involved in the cell polarity process where it is required for the correct termination of microtubule growth at the cell ends during interphase. The polypeptide is Nucleoporin-like protein amo1 (amo1) (Schizosaccharomyces pombe (strain 972 / ATCC 24843) (Fission yeast)).